A 115-amino-acid polypeptide reads, in one-letter code: Probable 4-amino-4-deoxy-L-arabinose-phosphoundecaprenol flippase subunit ArnE (115 aa).

The next 4 membrane-spanning stretches (helical) occupy residues 1–21 (MIVGYLLVVLVSLLTCGGQLC), 43–63 (WLALAVLLLGLGMAVWLNVLQ), 65–85 (LPLSLAYPTLSLNFVLVTLAA), and 93–113 (TTARHWYGVASIMLGILLMSI). Residues 44–113 (LALAVLLLGL…IMLGILLMSI (70 aa)) enclose the EamA domain.

Belongs to the ArnE family. In terms of assembly, heterodimer of ArnE and ArnF.

It is found in the cell inner membrane. Its pathway is bacterial outer membrane biogenesis; lipopolysaccharide biosynthesis. Its function is as follows. Translocates 4-amino-4-deoxy-L-arabinose-phosphoundecaprenol (alpha-L-Ara4N-phosphoundecaprenol) from the cytoplasmic to the periplasmic side of the inner membrane. In Serratia proteamaculans (strain 568), this protein is Probable 4-amino-4-deoxy-L-arabinose-phosphoundecaprenol flippase subunit ArnE.